The chain runs to 278 residues: Large ribosomal subunit protein uL2 (278 aa).

The segment at 202 to 278 is disordered; that stretch reads ANINDGKAGR…IMRSRHQRKK (77 aa).

It belongs to the universal ribosomal protein uL2 family. Part of the 50S ribosomal subunit. Forms a bridge to the 30S subunit in the 70S ribosome.

One of the primary rRNA binding proteins. Required for association of the 30S and 50S subunits to form the 70S ribosome, for tRNA binding and peptide bond formation. It has been suggested to have peptidyltransferase activity; this is somewhat controversial. Makes several contacts with the 16S rRNA in the 70S ribosome. This chain is Large ribosomal subunit protein uL2, found in Rhizobium johnstonii (strain DSM 114642 / LMG 32736 / 3841) (Rhizobium leguminosarum bv. viciae).